Reading from the N-terminus, the 336-residue chain is 4-hydroxythreonine-4-phosphate dehydrogenase (336 aa).

Substrate-binding residues include histidine 135 and threonine 136. A divalent metal cation is bound by residues histidine 165, histidine 210, and histidine 265. Substrate-binding residues include lysine 273, asparagine 282, and arginine 291.

This sequence belongs to the PdxA family. Homodimer. It depends on Zn(2+) as a cofactor. Mg(2+) is required as a cofactor. The cofactor is Co(2+).

Its subcellular location is the cytoplasm. It catalyses the reaction 4-(phosphooxy)-L-threonine + NAD(+) = 3-amino-2-oxopropyl phosphate + CO2 + NADH. The protein operates within cofactor biosynthesis; pyridoxine 5'-phosphate biosynthesis; pyridoxine 5'-phosphate from D-erythrose 4-phosphate: step 4/5. Its function is as follows. Catalyzes the NAD(P)-dependent oxidation of 4-(phosphooxy)-L-threonine (HTP) into 2-amino-3-oxo-4-(phosphooxy)butyric acid which spontaneously decarboxylates to form 3-amino-2-oxopropyl phosphate (AHAP). This chain is 4-hydroxythreonine-4-phosphate dehydrogenase, found in Marinobacter nauticus (strain ATCC 700491 / DSM 11845 / VT8) (Marinobacter aquaeolei).